We begin with the raw amino-acid sequence, 511 residues long: MRIIPRTMSTQHPDNAKVPEWAKSEVIEGEDEVKEAFLAYSMYGVHEVMWDAEGKDVDTHVVRKLLSNYPDYFREHILGKDVFLTYRLPNPKVEGADRKVFAETMESIPITYDLAEKFYGNGITVPVFEVILPMTTSNLEIISVARYYEKAVANEDELELYDGVKVKDLVGEIYPKVIEVIPLVEERDSLQNIDNIVEGYYKVIKPKYMRVFLARSDPAMNYGMITAVLSVKIALSELYKLSESLNFEIYPIIGVGSLPFRGHLSPENYEKVLEEYKGVYTYTIQSAFKYDYDYDKVKSAISSINNSRIGPAKILEKYEEDVLRKITILYTERYQPIIESLANAINDVSVLLPRRRARKLHIGLFGYSRSAGKVSLPRAISFVGSLYSIGIPPELIGISSLSNLDEKEWDIFKQNYVNFKHDLQTAARFFNWESFELIKDIWKISEDTIAKIKEDIDYAESVIGIKLGGIDYDSRKHILMSSLFLLSFKEKILQESKKYLYEMALIRRSLG.

This sequence belongs to the PEPCase type 2 family. Homotetramer. The cofactor is Mg(2+).

It carries out the reaction oxaloacetate + phosphate = phosphoenolpyruvate + hydrogencarbonate. Catalyzes the irreversible beta-carboxylation of phosphoenolpyruvate (PEP) to form oxaloacetate (OAA), a four-carbon dicarboxylic acid source for the tricarboxylic acid cycle. This chain is Phosphoenolpyruvate carboxylase, found in Saccharolobus islandicus (strain L.S.2.15 / Lassen #1) (Sulfolobus islandicus).